A 467-amino-acid polypeptide reads, in one-letter code: Flagellum-specific ATP synthase (467 aa).

180–187 (AGSGVGKS) contributes to the ATP binding site.

This sequence belongs to the ATPase alpha/beta chains family.

Its subcellular location is the cytoplasm. The enzyme catalyses ATP + H2O + 4 H(+)(in) = ADP + phosphate + 5 H(+)(out). In terms of biological role, probable catalytic subunit of a protein translocase for flagellum-specific export, or a proton translocase involved in local circuits at the flagellum. This Rhizobium meliloti (strain 1021) (Ensifer meliloti) protein is Flagellum-specific ATP synthase (fliI).